Here is a 761-residue protein sequence, read N- to C-terminus: T-box protein 1 (761 aa).

Disordered regions lie at residues 1-85 (MLGR…QPLT) and 167-210 (QTDP…CSSP). Polar residues-rich tracts occupy residues 37–61 (DLQN…NQAG) and 167–179 (QTDP…FPQA). Composition is skewed to low complexity over residues 180–191 (SPSDLSTTSSQS) and 198–210 (SSPS…CSSP). Positions 287–456 (LWRKFHEHRT…HNPFAKGFRD (170 aa)) form a DNA-binding region, T-box. The segment covering 496 to 510 (TTGFPCQTNPTQRSN) has biased composition (polar residues). Disordered stretches follow at residues 496–515 (TTGF…QHEG), 545–612 (SGDA…TPAH), and 637–687 (VCSS…LLTT). The segment covering 600 to 612 (GCERSNEKHTPAH) has biased composition (basic and acidic residues). The segment covering 637 to 646 (VCSSDNSNPD) has biased composition (polar residues). Residues 656 to 687 (SPAGSGSPSVTSGTSLFTSGSSAAPSPPLLTT) show a composition bias toward low complexity.

The protein localises to the nucleus. In terms of biological role, probable transcriptional regulator involved in developmental processes. This Patiria pectinifera (Starfish) protein is T-box protein 1 (tbr1).